Consider the following 208-residue polypeptide: Dephospho-CoA kinase (208 aa).

The region spanning 3–208 is the DPCK domain; sequence EIGLTGGIGS…ALSAAGVTQA (206 aa). 11 to 16 serves as a coordination point for ATP; that stretch reads GSGKTR.

Belongs to the CoaE family.

It is found in the cytoplasm. It catalyses the reaction 3'-dephospho-CoA + ATP = ADP + CoA + H(+). The protein operates within cofactor biosynthesis; coenzyme A biosynthesis; CoA from (R)-pantothenate: step 5/5. In terms of biological role, catalyzes the phosphorylation of the 3'-hydroxyl group of dephosphocoenzyme A to form coenzyme A. This is Dephospho-CoA kinase from Cupriavidus pinatubonensis (strain JMP 134 / LMG 1197) (Cupriavidus necator (strain JMP 134)).